The following is a 196-amino-acid chain: Imidazoleglycerol-phosphate dehydratase (196 aa).

The protein belongs to the imidazoleglycerol-phosphate dehydratase family.

It is found in the cytoplasm. The enzyme catalyses D-erythro-1-(imidazol-4-yl)glycerol 3-phosphate = 3-(imidazol-4-yl)-2-oxopropyl phosphate + H2O. It participates in amino-acid biosynthesis; L-histidine biosynthesis; L-histidine from 5-phospho-alpha-D-ribose 1-diphosphate: step 6/9. This is Imidazoleglycerol-phosphate dehydratase from Ralstonia nicotianae (strain ATCC BAA-1114 / GMI1000) (Ralstonia solanacearum).